The primary structure comprises 622 residues: MDSHSGEPALLPCGTCDMVFRSSALLATHTQRFCIGHPTQEMTFGAQASVATEPQRAAVVPQEHQGVPQEPQGLPDQQASRSALKRLTEEVQWLRLSLQEMRPWITEVPRVFAGPWTRSEARPQSPMSEAVGSPSERLRALFRTRARRVAEMEAQSRALQLRGEELSRRLQVVACTRGGMSRLFGLEQEIRELQAEAGRTRGALEVLGARIQELQAEPGNPLSSRREAELYSPVQKANPGTLAAEIRALREAYIRDGGRDPGVLGQIWQLQVEASALELQRSQTRRGRAGATSGELPVVEAENRRLEAEILALQMQRGRAPLGPQDLRLLGDASLQPKGRRDPPLLPPPVAPPLPPLPGFSEPQLPGTMTRNLGLDSHFLLPTSDMLGPAPYDPGAGLVIFYDFLRGLEASWIWVQLRTGLARDGRDTGRTTALPPALCLPPPPAPGPMGNCAILASRQPVPRLPPSSSVSLVCELQVWQGLAWARAPQPKAWVSLGLFDQDQRVLSGRWRLPLRALPLDPSLSLGQLNGIPQAGQAELFLRLVNARDAAVQTLAEINPASVHEYQYPPPVSSTSSLEASFLTPAVGFADPPPRTEEPLSGVKDRDEGLGPHHSSDLPPVSF.

Coiled-coil stretches lie at residues 81-102, 146-207, and 294-320; these read RSAL…QEMR, ARRV…LEVL, and GELP…RGRA. Disordered stretches follow at residues 334 to 356 and 584 to 622; these read SLQP…PLPP and PAVG…PVSF. Residues 344-356 show a composition bias toward pro residues; the sequence is PLLPPPVAPPLPP. A compositionally biased stretch (basic and acidic residues) spans 593–615; that stretch reads PRTEEPLSGVKDRDEGLGPHHSS.

The polypeptide is Coiled-coil domain-containing protein 17 (CCDC17) (Homo sapiens (Human)).